Here is a 338-residue protein sequence, read N- to C-terminus: Phenylalanine--tRNA ligase alpha subunit (338 aa).

Glu259 provides a ligand contact to Mg(2+).

It belongs to the class-II aminoacyl-tRNA synthetase family. Phe-tRNA synthetase alpha subunit type 1 subfamily. In terms of assembly, tetramer of two alpha and two beta subunits. Mg(2+) serves as cofactor.

Its subcellular location is the cytoplasm. It carries out the reaction tRNA(Phe) + L-phenylalanine + ATP = L-phenylalanyl-tRNA(Phe) + AMP + diphosphate + H(+). This Janthinobacterium sp. (strain Marseille) (Minibacterium massiliensis) protein is Phenylalanine--tRNA ligase alpha subunit.